The following is a 213-amino-acid chain: V-type ATP synthase subunit D (213 aa).

It belongs to the V-ATPase D subunit family.

Its function is as follows. Produces ATP from ADP in the presence of a proton gradient across the membrane. In Clostridium botulinum (strain Alaska E43 / Type E3), this protein is V-type ATP synthase subunit D.